Reading from the N-terminus, the 208-residue chain is Holliday junction resolvase RecU (208 aa).

4 residues coordinate Mg(2+): T87, D89, E102, and Q121.

Belongs to the RecU family. Mg(2+) serves as cofactor.

Its subcellular location is the cytoplasm. The catalysed reaction is Endonucleolytic cleavage at a junction such as a reciprocal single-stranded crossover between two homologous DNA duplexes (Holliday junction).. Functionally, endonuclease that resolves Holliday junction intermediates in genetic recombination. Cleaves mobile four-strand junctions by introducing symmetrical nicks in paired strands. Promotes annealing of linear ssDNA with homologous dsDNA. Required for DNA repair, homologous recombination and chromosome segregation. The sequence is that of Holliday junction resolvase RecU from Staphylococcus aureus (strain MRSA252).